Reading from the N-terminus, the 345-residue chain is MDLIKEFERLIPEIKKNLEQASSLEHIEQIRVAFLGRKGQLAALMSKIPSVDTSLRPVVGETANSVKNQLTQLIHEYKTQLDFLTTTNRIQNFDAGLPGKRPWYGTLHPITIVLEEICSVFTSLGYTIATGPEVETEYHNFEALGIPSEHPARDMQDTFYISDSILLRTHTSSIQIRTMLKKQPPIAIIAPGRVYRRDSDVTHTPMFHQIEGLVVDKNISMSHLRGTLTAFLKTIFGAEIKIRFRPSFFPFTEPSAEMDISCHPCNNTGYVKNEICRICKGSGWIEILGCGMVHPKVFESVGYDHNIYSGFAFGLGVERIAMLKYHIEDLRIFFENDLRFLRQFM.

Position 253 (E253) interacts with Mg(2+).

Belongs to the class-II aminoacyl-tRNA synthetase family. Phe-tRNA synthetase alpha subunit type 1 subfamily. In terms of assembly, tetramer of two alpha and two beta subunits. Mg(2+) serves as cofactor.

The protein localises to the cytoplasm. It catalyses the reaction tRNA(Phe) + L-phenylalanine + ATP = L-phenylalanyl-tRNA(Phe) + AMP + diphosphate + H(+). The sequence is that of Phenylalanine--tRNA ligase alpha subunit from Lawsonia intracellularis (strain PHE/MN1-00).